The following is a 286-amino-acid chain: uncharacterized protein (286 aa).

The signal sequence occupies residues 1 to 19 (MISKEYISLLSALLTKGYS).

This is an uncharacterized protein from Acidianus filamentous virus 2 (isolate Italy/Pozzuoli) (AFV-2).